A 362-amino-acid chain; its full sequence is Phosphoserine aminotransferase (362 aa).

Residues S9 and R42 each coordinate L-glutamate. Pyridoxal 5'-phosphate contacts are provided by residues 76-77 (GR), W102, T153, D174, and Q197. K198 is modified (N6-(pyridoxal phosphate)lysine). A pyridoxal 5'-phosphate-binding site is contributed by 239–240 (NT).

It belongs to the class-V pyridoxal-phosphate-dependent aminotransferase family. SerC subfamily. Homodimer. Requires pyridoxal 5'-phosphate as cofactor.

Its subcellular location is the cytoplasm. The enzyme catalyses O-phospho-L-serine + 2-oxoglutarate = 3-phosphooxypyruvate + L-glutamate. It carries out the reaction 4-(phosphooxy)-L-threonine + 2-oxoglutarate = (R)-3-hydroxy-2-oxo-4-phosphooxybutanoate + L-glutamate. It participates in amino-acid biosynthesis; L-serine biosynthesis; L-serine from 3-phospho-D-glycerate: step 2/3. Its pathway is cofactor biosynthesis; pyridoxine 5'-phosphate biosynthesis; pyridoxine 5'-phosphate from D-erythrose 4-phosphate: step 3/5. Functionally, catalyzes the reversible conversion of 3-phosphohydroxypyruvate to phosphoserine and of 3-hydroxy-2-oxo-4-phosphonooxybutanoate to phosphohydroxythreonine. The chain is Phosphoserine aminotransferase from Klebsiella pneumoniae subsp. pneumoniae (strain ATCC 700721 / MGH 78578).